Reading from the N-terminus, the 180-residue chain is Large ribosomal subunit protein uL5 (180 aa).

This sequence belongs to the universal ribosomal protein uL5 family. Part of the 50S ribosomal subunit; part of the 5S rRNA/L5/L18/L25 subcomplex. Contacts the 5S rRNA and the P site tRNA. Forms a bridge to the 30S subunit in the 70S ribosome.

Functionally, this is one of the proteins that bind and probably mediate the attachment of the 5S RNA into the large ribosomal subunit, where it forms part of the central protuberance. In the 70S ribosome it contacts protein S13 of the 30S subunit (bridge B1b), connecting the 2 subunits; this bridge is implicated in subunit movement. Contacts the P site tRNA; the 5S rRNA and some of its associated proteins might help stabilize positioning of ribosome-bound tRNAs. This is Large ribosomal subunit protein uL5 from Chlamydia trachomatis serovar A (strain ATCC VR-571B / DSM 19440 / HAR-13).